A 75-amino-acid chain; its full sequence is Small ribosomal subunit protein bS18 (75 aa).

It belongs to the bacterial ribosomal protein bS18 family. In terms of assembly, part of the 30S ribosomal subunit. Forms a tight heterodimer with protein bS6.

In terms of biological role, binds as a heterodimer with protein bS6 to the central domain of the 16S rRNA, where it helps stabilize the platform of the 30S subunit. This Shewanella halifaxensis (strain HAW-EB4) protein is Small ribosomal subunit protein bS18.